The primary structure comprises 179 residues: CDP-archaeol synthase (179 aa).

4 consecutive transmembrane segments (helical) span residues 53–73 (FVGGVAGGVLTANLQYAIEKL), 88–108 (FTLTFLLAFGAMFGDLCGSFI), 120–140 (FLIVDQLMFLLVALLIASLYP), and 145–165 (LFTAEIIALAVIITPALHMGI).

It belongs to the CDP-archaeol synthase family. The cofactor is Mg(2+).

It localises to the cell membrane. The catalysed reaction is 2,3-bis-O-(geranylgeranyl)-sn-glycerol 1-phosphate + CTP + H(+) = CDP-2,3-bis-O-(geranylgeranyl)-sn-glycerol + diphosphate. Its pathway is membrane lipid metabolism; glycerophospholipid metabolism. Catalyzes the formation of CDP-2,3-bis-(O-geranylgeranyl)-sn-glycerol (CDP-archaeol) from 2,3-bis-(O-geranylgeranyl)-sn-glycerol 1-phosphate (DGGGP) and CTP. This reaction is the third ether-bond-formation step in the biosynthesis of archaeal membrane lipids. Can use CTP or dCTP, but not ATP, GTP or TTP. The chain is CDP-archaeol synthase from Archaeoglobus fulgidus (strain ATCC 49558 / DSM 4304 / JCM 9628 / NBRC 100126 / VC-16).